A 524-amino-acid chain; its full sequence is Probable cytosol aminopeptidase (524 aa).

Lysine 288 and aspartate 293 together coordinate Mn(2+). Lysine 300 is an active-site residue. Mn(2+) contacts are provided by aspartate 311, aspartate 370, and glutamate 372. Arginine 374 is a catalytic residue.

Belongs to the peptidase M17 family. The cofactor is Mn(2+).

The protein resides in the cytoplasm. It carries out the reaction Release of an N-terminal amino acid, Xaa-|-Yaa-, in which Xaa is preferably Leu, but may be other amino acids including Pro although not Arg or Lys, and Yaa may be Pro. Amino acid amides and methyl esters are also readily hydrolyzed, but rates on arylamides are exceedingly low.. The catalysed reaction is Release of an N-terminal amino acid, preferentially leucine, but not glutamic or aspartic acids.. Presumably involved in the processing and regular turnover of intracellular proteins. Catalyzes the removal of unsubstituted N-terminal amino acids from various peptides. This is Probable cytosol aminopeptidase (pepA) from Mycobacterium leprae (strain TN).